We begin with the raw amino-acid sequence, 218 residues long: ATP phosphoribosyltransferase (218 aa).

It belongs to the ATP phosphoribosyltransferase family. Short subfamily. Heteromultimer composed of HisG and HisZ subunits.

Its subcellular location is the cytoplasm. The catalysed reaction is 1-(5-phospho-beta-D-ribosyl)-ATP + diphosphate = 5-phospho-alpha-D-ribose 1-diphosphate + ATP. It participates in amino-acid biosynthesis; L-histidine biosynthesis; L-histidine from 5-phospho-alpha-D-ribose 1-diphosphate: step 1/9. Its function is as follows. Catalyzes the condensation of ATP and 5-phosphoribose 1-diphosphate to form N'-(5'-phosphoribosyl)-ATP (PR-ATP). Has a crucial role in the pathway because the rate of histidine biosynthesis seems to be controlled primarily by regulation of HisG enzymatic activity. In Burkholderia mallei (strain ATCC 23344), this protein is ATP phosphoribosyltransferase.